The chain runs to 440 residues: Xylose isomerase (440 aa).

Catalysis depends on residues His100 and Asp103. Positions 231, 267, 270, 295, 306, 308, and 338 each coordinate Mg(2+).

This sequence belongs to the xylose isomerase family. Homotetramer. Mg(2+) serves as cofactor.

It is found in the cytoplasm. It catalyses the reaction alpha-D-xylose = alpha-D-xylulofuranose. This chain is Xylose isomerase, found in Paraburkholderia phytofirmans (strain DSM 17436 / LMG 22146 / PsJN) (Burkholderia phytofirmans).